Consider the following 272-residue polypeptide: Phosphate import ATP-binding protein PstB 1 (272 aa).

One can recognise an ABC transporter domain in the interval 26 to 267; that stretch reads ITIENLDLHY…PMKKQTEDYI (242 aa). 58–65 is an ATP binding site; sequence GPSGCGKS.

It belongs to the ABC transporter superfamily. Phosphate importer (TC 3.A.1.7) family. The complex is composed of two ATP-binding proteins (PstB), two transmembrane proteins (PstC and PstA) and a solute-binding protein (PstS).

The protein resides in the cell inner membrane. The catalysed reaction is phosphate(out) + ATP + H2O = ADP + 2 phosphate(in) + H(+). Its function is as follows. Part of the ABC transporter complex PstSACB involved in phosphate import. Responsible for energy coupling to the transport system. This is Phosphate import ATP-binding protein PstB 1 from Vibrio vulnificus (strain YJ016).